Here is a 330-residue protein sequence, read N- to C-terminus: Delta-aminolevulinic acid dehydratase (330 aa).

4 residues coordinate Zn(2+): cysteine 122, cysteine 124, histidine 131, and cysteine 132. Lysine 199 serves as the catalytic Schiff-base intermediate with substrate. Lysine 199 is subject to N6-succinyllysine. Arginine 209 is a 5-aminolevulinate binding site. Serine 215 is subject to Phosphoserine. Arginine 221 serves as a coordination point for 5-aminolevulinate. Cysteine 223 is a binding site for Zn(2+). Lysine 252 (schiff-base intermediate with substrate) is an active-site residue. Position 252 is an N6-succinyllysine (lysine 252). Positions 279 and 318 each coordinate 5-aminolevulinate.

It belongs to the ALAD family. Homooctamer; active form. Homohexamer; low activity form. It depends on Zn(2+) as a cofactor.

The protein resides in the cytoplasm. Its subcellular location is the cytosol. The enzyme catalyses 2 5-aminolevulinate = porphobilinogen + 2 H2O + H(+). Its pathway is porphyrin-containing compound metabolism; protoporphyrin-IX biosynthesis; coproporphyrinogen-III from 5-aminolevulinate: step 1/4. Its activity is regulated as follows. Can alternate between a fully active homooctamer and a low-activity homohexamer. A bound magnesium ion may promote the assembly of the fully active homooctamer. The magnesium-binding site is absent in the low-activity homohexamer. Inhibited by compounds that favor the hexameric state. Inhibited by divalent lead ions. The lead ions partially displace the zinc cofactor. Functionally, catalyzes an early step in the biosynthesis of tetrapyrroles. Binds two molecules of 5-aminolevulinate per subunit, each at a distinct site, and catalyzes their condensation to form porphobilinogen. The sequence is that of Delta-aminolevulinic acid dehydratase (Alad) from Rattus norvegicus (Rat).